Consider the following 152-residue polypeptide: uncharacterized protein (152 aa).

This is an uncharacterized protein from Acanthamoeba polyphaga (Amoeba).